Consider the following 259-residue polypeptide: MAALMRSKDSSCCLLLLAAVLMVESSQIGSSRAKLNSIKSSLGGETPGQAANRSAGMYQGLAFGGSKKGKNLGQAYPCSSDKECEVGRYCHSPHQGSSACMVCRRKKKRCHRDGMCCPSTRCNNGICIPVTESILTPHIPALDGTRHRDRNHGHYSNHDLGWQNLGRPHTKMSHIKGHEGDPCLRSSDCIEGFCCARHFWTKICKPVLHQGEVCTKQRKKGSHGLEIFQRCDCAKGLSCKVWKDATYSSKARLHVCQKI.

An N-terminal signal peptide occupies residues 1–33 (MAALMRSKDSSCCLLLLAAVLMVESSQIGSSRA). The N-linked (GlcNAc...) asparagine glycan is linked to asparagine 52. A DKK-type Cys-1 region spans residues 78–127 (CSSDKECEVGRYCHSPHQGSSACMVCRRKKKRCHRDGMCCPSTRCNNGIC). 5 disulfides stabilise this stretch: cysteine 183/cysteine 195, cysteine 189/cysteine 204, cysteine 194/cysteine 231, cysteine 214/cysteine 239, and cysteine 233/cysteine 256. The interval 183-256 (CLRSSDCIEG…YSSKARLHVC (74 aa)) is DKK-type Cys-2.

Belongs to the dickkopf family. Interacts with LRP5 and LRP6. May be proteolytically processed by a furin-like protease. In terms of tissue distribution, expressed in heart, brain, skeletal muscle and lung.

The protein resides in the secreted. Its function is as follows. Antagonizes canonical Wnt signaling by inhibiting LRP5/6 interaction with Wnt and by forming a ternary complex with the transmembrane protein KREMEN that promotes internalization of LRP5/6. DKKs play an important role in vertebrate development, where they locally inhibit Wnt regulated processes such as antero-posterior axial patterning, limb development, somitogenesis and eye formation. In the adult, Dkks are implicated in bone formation and bone disease, cancer and Alzheimer disease. The chain is Dickkopf-related protein 2 (DKK2) from Homo sapiens (Human).